Here is a 141-residue protein sequence, read N- to C-terminus: Large ribosomal subunit protein bL17 (141 aa).

This sequence belongs to the bacterial ribosomal protein bL17 family. As to quaternary structure, part of the 50S ribosomal subunit. Contacts protein L32.

The polypeptide is Large ribosomal subunit protein bL17 (Rhizobium meliloti (strain 1021) (Ensifer meliloti)).